The primary structure comprises 253 residues: Vitamin B12 import ATP-binding protein BtuD (253 aa).

The region spanning 1-236 is the ABC transporter domain; sequence MTNQLMALNQ…NTLSRVFAAD (236 aa). Residue 34 to 41 participates in ATP binding; that stretch reads GPNGSGKS.

This sequence belongs to the ABC transporter superfamily. Vitamin B12 importer (TC 3.A.1.13.1) family. As to quaternary structure, the complex is composed of two ATP-binding proteins (BtuD), two transmembrane proteins (BtuC) and a solute-binding protein (BtuF).

The protein localises to the cell inner membrane. The enzyme catalyses an R-cob(III)alamin(out) + ATP + H2O = an R-cob(III)alamin(in) + ADP + phosphate + H(+). In terms of biological role, part of the ABC transporter complex BtuCDF involved in vitamin B12 import. Responsible for energy coupling to the transport system. The sequence is that of Vitamin B12 import ATP-binding protein BtuD from Photorhabdus laumondii subsp. laumondii (strain DSM 15139 / CIP 105565 / TT01) (Photorhabdus luminescens subsp. laumondii).